We begin with the raw amino-acid sequence, 319 residues long: F-box only protein 8 (319 aa).

In terms of domain architecture, F-box spans 68–111 (FINLEMLPPELSFTILSYLNATDLCLASCVWQDLANDELLWQGL). The region spanning 146 to 276 (FNANPEEGVS…LILLSIDLTS (131 aa)) is the SEC7 domain.

High expression in brain, heart, kidney, liver, lung, skeletal muscle, testis, and day-7 embryos.

Its function is as follows. May promote guanine-nucleotide exchange on an ARF. Promotes the activation of ARF through replacement of GDP with GTP (Potential). The polypeptide is F-box only protein 8 (Fbxo8) (Mus musculus (Mouse)).